The chain runs to 1887 residues: DNA-directed RNA polymerase II subunit RPB1 (1887 aa).

Residues cysteine 67, cysteine 70, cysteine 77, histidine 80, cysteine 107, cysteine 110, cysteine 150, and cysteine 176 each contribute to the Zn(2+) site. A disordered region spans residues 156–178; the sequence is MDLTKENQQPDPNKKPGHGGCGH. Mg(2+) contacts are provided by aspartate 487, aspartate 489, and aspartate 491. The interval 825 to 837 is bridging helix; the sequence is PSEFYFHAMGGRE. Lysine 1260 participates in a covalent cross-link: Glycyl lysine isopeptide (Lys-Gly) (interchain with G-Cter in ubiquitin). Disordered regions lie at residues 1528 to 1565 and 1579 to 1887; these read TPGG…GPSM and YSPT…ESED. Low complexity-rich tracts occupy residues 1529–1565, 1579–1610, and 1626–1650; these read PGGP…GPSM, YSPT…PTSP, and PQST…PTVQ. The stretch at 1579–1585 is repeat 1; the sequence is YSPTSPN. Residues 1579-1881 form a C-terminal domain (CTD); 32 X 7 AA approximate tandem repeats of Y-[ST]-P-[STNVAPGN]-[STGMA]-[PSTR]-[SNAGCQKTLRIMH] region; sequence YSPTSPNYTA…SPAYSPSSPT (303 aa). Residues 1586–1592 form a 2; approximate repeat; it reads YTASSPG. 4 consecutive repeat copies span residues 1598-1604, 1605-1611, 1631-1637, and 1638-1644. Positions 1651-1664 are enriched in polar residues; the sequence is FQSSPSFAGSGSNI. A compositionally biased stretch (low complexity) spans 1665-1760; it reads YSPGNAYSPS…GVKYSPTSPT (96 aa). Repeat copies occupy residues 1671-1677, 1678-1684, 1685-1691, 1692-1698, 1699-1705, 1706-1712, 1713-1719, 1720-1726, 1727-1733, 1740-1746, 1754-1760, 1761-1767, 1777-1783, 1784-1790, 1791-1797, 1798-1804, and 1811-1817. Polar residues predominate over residues 1776–1786; the sequence is QYTPGSPQYSP. The segment covering 1788 to 1813 has biased composition (low complexity); it reads SPKYSPTSPLYSPSSPQHSPSNQYSP. Positions 1814–1831 are enriched in polar residues; sequence TGSTYSATSPRYSPNMSI. The 24; approximate repeat unit spans residues 1818–1824; that stretch reads YSATSPR. Tandem repeats lie at residues 1825-1831, 1832-1838, 1839-1845, 1846-1852, 1853-1859, 1860-1866, 1868-1874, and 1875-1881. Low complexity predominate over residues 1832–1849; the sequence is YSPSSTKYSPTSPTYTPT. Polar residues predominate over residues 1850-1859; sequence ARNYSPTSPM. Residues 1860 to 1881 show a composition bias toward low complexity; sequence YSPTAPSHYSPTSPAYSPSSPT.

The protein belongs to the RNA polymerase beta' chain family. As to quaternary structure, component of the RNA polymerase II (Pol II) complex consisting of 12 subunits. In terms of processing, the tandem 7 residues repeats in the C-terminal domain (CTD) can be highly phosphorylated. The phosphorylation activates Pol II. Phosphorylation occurs mainly at residues 'Ser-2' and 'Ser-5' of the heptapeptide repeat. The phosphorylation state is believed to result from the balanced action of site-specific CTD kinases and phosphatase, and a 'CTD code' that specifies the position of Pol II within the transcription cycle has been proposed. Post-translationally, following transcription stress, the elongating form of RNA polymerase II (RNA pol IIo) is polyubiquitinated via 'Lys-63'-linkages on Lys-1260 at DNA damage sites without leading to degradation: ubiquitination promotes RNA pol IIo backtracking to allow access by the transcription-coupled nucleotide excision repair (TC-NER) machinery. Subsequent DEF1-dependent polyubiquitination by the elongin complex via 'Lys-48'-linkages may lead to proteasome-mediated degradation; presumably at stalled RNA pol II where TC-NER has failed, to halt global transcription and enable 'last resort' DNA repair pathways.

It localises to the nucleus. It catalyses the reaction RNA(n) + a ribonucleoside 5'-triphosphate = RNA(n+1) + diphosphate. Functionally, DNA-dependent RNA polymerase catalyzes the transcription of DNA into RNA using the four ribonucleoside triphosphates as substrates. Largest and catalytic component of RNA polymerase II which synthesizes mRNA precursors and many functional non-coding RNAs. Forms the polymerase active center together with the second largest subunit. Pol II is the central component of the basal RNA polymerase II transcription machinery. It is composed of mobile elements that move relative to each other. RPB1 is part of the core element with the central large cleft, the clamp element that moves to open and close the cleft and the jaws that are thought to grab the incoming DNA template. At the start of transcription, a single-stranded DNA template strand of the promoter is positioned within the central active site cleft of Pol II. A bridging helix emanates from RPB1 and crosses the cleft near the catalytic site and is thought to promote translocation of Pol II by acting as a ratchet that moves the RNA-DNA hybrid through the active site by switching from straight to bent conformations at each step of nucleotide addition. During transcription elongation, Pol II moves on the template as the transcript elongates. Elongation is influenced by the phosphorylation status of the C-terminal domain (CTD) of Pol II largest subunit (RPB1), which serves as a platform for assembly of factors that regulate transcription initiation, elongation, termination and mRNA processing. The sequence is that of DNA-directed RNA polymerase II subunit RPB1 from Drosophila melanogaster (Fruit fly).